The primary structure comprises 377 residues: Lactosylceramide 1,3-N-acetyl-beta-D-glucosaminyltransferase A (377 aa).

Residues 1 to 12 are Cytoplasmic-facing; the sequence is MLISARRLRRCQ. Residues 13–30 form a helical; Signal-anchor for type II membrane protein membrane-spanning segment; the sequence is FLQLLASCFVLSLMALLV. The Lumenal portion of the chain corresponds to 31–377; it reads QEDNSLISHV…DTYPCSAAWS (347 aa). 3 N-linked (GlcNAc...) asparagine glycosylation sites follow: asparagine 56, asparagine 167, and asparagine 275.

It belongs to the glycosyltransferase 31 family.

It localises to the golgi apparatus membrane. The enzyme catalyses a beta-D-Gal-(1-&gt;4)-beta-D-Glc-(1&lt;-&gt;1)-Cer(d18:1(4E)) + UDP-N-acetyl-alpha-D-glucosamine = a beta-D-GlcNAc-(1-&gt;3)-beta-D-Gal-(1-&gt;4)-beta-D-Glc-(1&lt;-&gt;1)-Cer(d18:1(4E)) + UDP + H(+). It carries out the reaction a neolactoside nLc4Cer(d18:1(4E)) + UDP-N-acetyl-alpha-D-glucosamine = a neolactoside IV(3)-beta-GlcNAc-nLc4Cer(d18:1(4E)) + UDP + H(+). The protein operates within protein modification; protein glycosylation. Functionally, beta-1,3-N-acetylglucosaminyltransferase that plays a key role in the synthesis of lacto- or neolacto-series carbohydrate chains on glycolipids. This chain is Lactosylceramide 1,3-N-acetyl-beta-D-glucosaminyltransferase A (b3gnt5-a), found in Xenopus laevis (African clawed frog).